We begin with the raw amino-acid sequence, 273 residues long: ATP synthase subunit delta (273 aa).

The protein belongs to the ATPase delta chain family. F-type ATPases have 2 components, F(1) - the catalytic core - and F(0) - the membrane proton channel. F(1) has five subunits: alpha(3), beta(3), gamma(1), delta(1), epsilon(1). F(0) has three main subunits: a(1), b(2) and c(10-14). The alpha and beta chains form an alternating ring which encloses part of the gamma chain. F(1) is attached to F(0) by a central stalk formed by the gamma and epsilon chains, while a peripheral stalk is formed by the delta and b chains.

It localises to the cell membrane. Functionally, f(1)F(0) ATP synthase produces ATP from ADP in the presence of a proton or sodium gradient. F-type ATPases consist of two structural domains, F(1) containing the extramembraneous catalytic core and F(0) containing the membrane proton channel, linked together by a central stalk and a peripheral stalk. During catalysis, ATP synthesis in the catalytic domain of F(1) is coupled via a rotary mechanism of the central stalk subunits to proton translocation. This protein is part of the stalk that links CF(0) to CF(1). It either transmits conformational changes from CF(0) to CF(1) or is implicated in proton conduction. The sequence is that of ATP synthase subunit delta from Streptomyces avermitilis (strain ATCC 31267 / DSM 46492 / JCM 5070 / NBRC 14893 / NCIMB 12804 / NRRL 8165 / MA-4680).